The primary structure comprises 356 residues: Altered inheritance of mitochondria protein 23, mitochondrial (356 aa).

The transit peptide at 1-32 (MLKVPLSDVLSQKMLFLKSFRYFHCTKYFSRD) directs the protein to the mitochondrion.

It belongs to the AIM23 family.

It localises to the mitochondrion. This Saccharomyces cerevisiae (strain YJM789) (Baker's yeast) protein is Altered inheritance of mitochondria protein 23, mitochondrial (AIM23).